Here is a 216-residue protein sequence, read N- to C-terminus: MNAEQAEQAAPGGLAPAGPRNDYYIPQWEERTSYGVRRVDPYTKLFEDRIIFLGTPVTDDIANAVMAQLLCLQSMDADRQISMYINSPGGSFTAMTAIYDTMNYVRPDIQTICLGMAASAAAVLLAAGAKGQRLSLPNSTVLIHQPAMGQATYGQATDIEILDDEIQRIRKLMENMLATATGQSVEQISKDIDRDKYLTAQGAKEYGLIDDILTSL.

Catalysis depends on Ser-119, which acts as the Nucleophile. His-144 is an active-site residue.

This sequence belongs to the peptidase S14 family. As to quaternary structure, fourteen ClpP subunits assemble into 2 heptameric rings which stack back to back to give a disk-like structure with a central cavity, resembling the structure of eukaryotic proteasomes.

Its subcellular location is the cytoplasm. The catalysed reaction is Hydrolysis of proteins to small peptides in the presence of ATP and magnesium. alpha-casein is the usual test substrate. In the absence of ATP, only oligopeptides shorter than five residues are hydrolyzed (such as succinyl-Leu-Tyr-|-NHMec, and Leu-Tyr-Leu-|-Tyr-Trp, in which cleavage of the -Tyr-|-Leu- and -Tyr-|-Trp bonds also occurs).. Cleaves peptides in various proteins in a process that requires ATP hydrolysis. Has a chymotrypsin-like activity. Plays a major role in the degradation of misfolded proteins. This is ATP-dependent Clp protease proteolytic subunit 1 from Cutibacterium acnes (strain DSM 16379 / KPA171202) (Propionibacterium acnes).